The chain runs to 49 residues: uncharacterized protein (49 aa).

A helical transmembrane segment spans residues 5–27 (ILEILSAFIRILFKLLYCWALFF).

Its subcellular location is the membrane. This is an uncharacterized protein from Saccharomyces cerevisiae (strain ATCC 204508 / S288c) (Baker's yeast).